Consider the following 89-residue polypeptide: Small ribosomal subunit protein uS15 (89 aa).

The segment at 1-25 (MSLDTTEKQQLINTHQTHGTDTGSA) is disordered. Positions 8–25 (KQQLINTHQTHGTDTGSA) are enriched in polar residues.

The protein belongs to the universal ribosomal protein uS15 family. In terms of assembly, part of the 30S ribosomal subunit. Forms a bridge to the 50S subunit in the 70S ribosome, contacting the 23S rRNA.

Functionally, one of the primary rRNA binding proteins, it binds directly to 16S rRNA where it helps nucleate assembly of the platform of the 30S subunit by binding and bridging several RNA helices of the 16S rRNA. Forms an intersubunit bridge (bridge B4) with the 23S rRNA of the 50S subunit in the ribosome. The polypeptide is Small ribosomal subunit protein uS15 (Synechococcus sp. (strain CC9902)).